A 341-amino-acid polypeptide reads, in one-letter code: Phosphate acyltransferase (341 aa).

It belongs to the PlsX family. In terms of assembly, homodimer. Probably interacts with PlsY.

It is found in the cytoplasm. It carries out the reaction a fatty acyl-[ACP] + phosphate = an acyl phosphate + holo-[ACP]. It functions in the pathway lipid metabolism; phospholipid metabolism. Its function is as follows. Catalyzes the reversible formation of acyl-phosphate (acyl-PO(4)) from acyl-[acyl-carrier-protein] (acyl-ACP). This enzyme utilizes acyl-ACP as fatty acyl donor, but not acyl-CoA. This chain is Phosphate acyltransferase, found in Elusimicrobium minutum (strain Pei191).